The sequence spans 1257 residues: Stromal processing peptidase, chloroplastic (1257 aa).

The N-terminal 142 residues, 1–142, are a transit peptide targeting the chloroplast; sequence MAASTSTSSL…ASVKRVQLPH (142 aa). Residue H236 participates in Zn(2+) binding. E239 (proton acceptor) is an active-site residue. Position 240 (H240) interacts with Zn(2+). E309 is a catalytic residue. E316 is a binding site for Zn(2+). The disordered stretch occupies residues 1233–1257; it reads EEAGEGYPGVLPMGRGLSTMTRPTT.

It belongs to the peptidase M16 family. The cofactor is Zn(2+).

Its subcellular location is the plastid. It localises to the chloroplast stroma. Its function is as follows. Cleaves presequences (transit peptides) from chloroplastic protein precursors. Initially recognizes a precursor by binding to the C-terminus of its transit peptide and then removes the transit peptide in a single endoproteolytic step. In a next step, pursues the cleavage of transit peptide to a subfragment form. The sequence is that of Stromal processing peptidase, chloroplastic from Pisum sativum (Garden pea).